We begin with the raw amino-acid sequence, 365 residues long: UDP-galactose transporter homolog 1 (365 aa).

2 helical membrane-spanning segments follow: residues 42–62 (IIDLIICVSGIYASFLTWAVL) and 80–100 (ASLVINTVQSFLAAAVGYAYL). An N-linked (GlcNAc...) asparagine glycan is attached at Asn-115. 2 consecutive transmembrane segments (helical) span residues 182–202 (YAVVVLVTIGVSMFTIFHAAP) and 206–226 (SGAGSEHQLYGLGLLGISMLL). N-linked (GlcNAc...) asparagine glycosylation is present at Asn-231. A run of 4 helical transmembrane segments spans residues 249–269 (VMCGLNLLTGVFTTVSLLTFS), 289–309 (DIVLFGLCGAVGQVFIFQTLE), 315–335 (VLVTVNVTRKMFSMLLSVVWF), and 339–359 (LTLGQWAGVAAVFGGIGFEAW).

This sequence belongs to the nucleotide-sugar transporter family. SLC35B subfamily.

The protein localises to the endoplasmic reticulum membrane. In terms of biological role, may be involved in specific transport of UDP-Gal from the cytosol to the Golgi lumen. Involved in the maintenance of optimal conditions for the folding of secretory pathway proteins in the endoplasmic reticulum. This Yarrowia lipolytica (strain CLIB 122 / E 150) (Yeast) protein is UDP-galactose transporter homolog 1 (HUT1).